Reading from the N-terminus, the 185-residue chain is Photosystem I assembly protein Ycf4 (185 aa).

Helical transmembrane passes span 21–43 (NFFWACILFLGSLGFLSVGISSY) and 63–85 (GVVMSFYGIAGLFISSYLWCTIL).

The protein belongs to the Ycf4 family.

The protein localises to the plastid. It is found in the chloroplast thylakoid membrane. Functionally, seems to be required for the assembly of the photosystem I complex. In Aegilops crassa (Persian goatgrass), this protein is Photosystem I assembly protein Ycf4.